Reading from the N-terminus, the 280-residue chain is Elongation factor 1-delta (280 aa).

Ala2 bears the N-acetylalanine mark. Lys17 carries the N6-acetyllysine modification. A phosphoserine mark is found at Ser37, Ser44, Ser60, Ser86, and Ser106. Lys107 bears the N6-acetyllysine mark. A disordered region spans residues 113–171 (SALEKSSPAHRATTPQTQHVSPMRQVEPPSRKAATATEDDEDDDIDLFGSDEEEDKEAT). The residue at position 117 (Lys117) is an N6-acetyllysine; alternate. Residue Lys117 is modified to N6-succinyllysine; alternate. A Phosphoserine modification is found at Ser119. Thr129 is modified (phosphothreonine). Ser133 carries the post-translational modification Phosphoserine. A Phosphothreonine modification is found at Thr147. Positions 149–168 (TEDDEDDDIDLFGSDEEEDK) are enriched in acidic residues. Ser162 is modified (phosphoserine; by CK2).

Belongs to the EF-1-beta/EF-1-delta family. As to quaternary structure, EF-1 is composed of 4 subunits: alpha, beta, delta, and gamma.

EF-1-beta and EF-1-delta stimulate the exchange of GDP bound to EF-1-alpha to GTP. This Bos taurus (Bovine) protein is Elongation factor 1-delta (EEF1D).